The following is a 581-amino-acid chain: Pyridine nucleotide-disulfide oxidoreductase domain-containing protein 2 (581 aa).

38-71 is a binding site for FAD; sequence VVIGAGHNGLVVAAYLQRLGVNTAVFERRHVIGG.

This sequence belongs to the carotenoid/retinoid oxidoreductase family. Interacts with COX5B; this interaction may contribute to localize PYROXD2 to the inner face of the inner mitochondrial membrane.

The protein resides in the mitochondrion matrix. Probable oxidoreductase that may play a role as regulator of mitochondrial function. The chain is Pyridine nucleotide-disulfide oxidoreductase domain-containing protein 2 from Pongo abelii (Sumatran orangutan).